The primary structure comprises 534 residues: 26S proteasome non-ATPase regulatory subunit 3 (534 aa).

Basic and acidic residues predominate over residues 1–16 (MKQEGSARRRGADKAK). A disordered region spans residues 1–68 (MKQEGSARRR…AAEHSQRELD (68 aa)). Over residues 17–32 (PPPGGGEQEPPPPPAP) the composition is skewed to pro residues. Lys38 participates in a covalent cross-link: Glycyl lysine isopeptide (Lys-Gly) (interchain with G-Cter in SUMO1); alternate. A Glycyl lysine isopeptide (Lys-Gly) (interchain with G-Cter in SUMO2); alternate cross-link involves residue Lys38. Residues 49–61 (GETAGKTAAAAAE) are compositionally biased toward low complexity. Residues 286-465 (ARYLYYTGRI…GYVQSKEMID (180 aa)) form the PCI domain. Phosphoserine is present on residues Ser418 and Ser430. The tract at residues 500–534 (SYNKDLESAEERREREQQDLEFAKEMAEDDDDSFP) is disordered. A compositionally biased stretch (basic and acidic residues) spans 501-525 (YNKDLESAEERREREQQDLEFAKEM).

Belongs to the proteasome subunit S3 family. In terms of assembly, component of the 19S proteasome regulatory particle complex. The 26S proteasome consists of a 20S core particle (CP) and two 19S regulatory subunits (RP). The regulatory particle is made of a lid composed of 9 subunits including PSMD3, a base containing 6 ATPases and few additional components. Interacts with UBQLN1 (via ubiquitin-like domain). Interacts with ERCC6.

Component of the 26S proteasome, a multiprotein complex involved in the ATP-dependent degradation of ubiquitinated proteins. This complex plays a key role in the maintenance of protein homeostasis by removing misfolded or damaged proteins, which could impair cellular functions, and by removing proteins whose functions are no longer required. Therefore, the proteasome participates in numerous cellular processes, including cell cycle progression, apoptosis, or DNA damage repair. This is 26S proteasome non-ATPase regulatory subunit 3 (PSMD3) from Bos taurus (Bovine).